The primary structure comprises 113 residues: N-alpha-acetyltransferase 38, NatC auxiliary subunit (113 aa).

The segment at 1–29 (MAAVLEENGCSRQSSPGAGDSDAEAGDTA) is disordered. The Sm domain occupies 28 to 106 (TARHKLESLL…IVSIQVELES (79 aa)).

This sequence belongs to the snRNP Sm proteins family. As to quaternary structure, component of the N-terminal acetyltransferase C (NatC) complex.

The protein localises to the cytoplasm. Its subcellular location is the nucleus. Auxillary component of the N-terminal acetyltransferase C (NatC) complex which catalyzes acetylation of N-terminal methionine residues. N-terminal acetylation protects proteins from ubiquitination and degradation by the N-end rule pathway. This is N-alpha-acetyltransferase 38, NatC auxiliary subunit (naa38) from Xenopus tropicalis (Western clawed frog).